The chain runs to 129 residues: Small ribosomal subunit protein uS11 (129 aa).

It belongs to the universal ribosomal protein uS11 family. As to quaternary structure, part of the 30S ribosomal subunit. Interacts with proteins S7 and S18. Binds to IF-3.

Functionally, located on the platform of the 30S subunit, it bridges several disparate RNA helices of the 16S rRNA. Forms part of the Shine-Dalgarno cleft in the 70S ribosome. The chain is Small ribosomal subunit protein uS11 from Pseudomonas putida (strain GB-1).